Here is a 360-residue protein sequence, read N- to C-terminus: MAKAPSWAGVGALAYKAPEALWPAEAVMDGTMEDSEAVQRATALIEQRLAQEEENEKLRGDARQKLPMDLLVLEDEKHHGAQSAALQKVKGQERVRKTSLDLRREIIDVGGIQNLIELRKKRKQKKRDALAASHEPPPEPEEITGPVDEETFLKAAVEGKMKVIEKFLADGGSADTCDQFRRTALHRASLEGHMEILEKLLDNGATVDFQDRLDCTAMHWACRGGHLEVVKLLQSHGADTNVRDKLLSTPLHVAVRTGQVEIVEHFLSLGLEINARDREGDTALHDAVRLNRYKIIKLLLLHGADMMTKNLAGKTPTDLVQLWQADTRHALEHPEPGAEHNGLEGPNDSGRETPQPVPAQ.

The segment at 5–120 (PSWAGVGALA…GIQNLIELRK (116 aa)) is may mediate interaction with PML, p53/TP53 and YBX1. Residue Ser-99 is modified to Phosphoserine; by PKB/AKT2. The tract at residues 126 to 147 (KRDALAASHEPPPEPEEITGPV) is disordered. Residues 138-147 (PEPEEITGPV) are compositionally biased toward acidic residues. ANK repeat units lie at residues 147 to 176 (VDEE…SADT), 180 to 209 (FRRT…TVDF), 213 to 242 (LDCT…DTNV), 246 to 275 (LLST…EINA), and 279 to 308 (EGDT…DMMT). The span at 330 to 342 (ALEHPEPGAEHNG) shows a compositional bias: basic and acidic residues. The segment at 330–360 (ALEHPEPGAEHNGLEGPNDSGRETPQPVPAQ) is disordered.

As to quaternary structure, interacts with ID3; both proteins cooperate in myoblast differentiation. Interacts with TTN/titin. Interacts (via ANK repeats) with TCAP; the interaction is direct. Interacts with TJP1 (via PDZ domains). Interacts with PML; the interaction is direct. Interacts with p53/TP53. Interacts with YBX1. Interacts with AKT2. In terms of processing, phosphorylation at Ser-99 by PKB/AKT2 in response to oxidative stress induces translocation to the nucleus and negatively regulates myoblast differentiation. Mostly expressed in skeletal and cardiac muscles. Found in slow fibers. Also expressed in kidney, but to a lower extent (at protein level).

It localises to the cytoplasm. The protein localises to the myofibril. The protein resides in the sarcomere. Its subcellular location is the i band. It is found in the cytosol. It localises to the nucleus. The protein localises to the PML body. In terms of biological role, functions as a negative regulator of myocyte differentiation. May interact with both sarcoplasmic structural proteins and nuclear proteins to regulate gene expression during muscle development and in response to muscle stress. This Homo sapiens (Human) protein is Ankyrin repeat domain-containing protein 2 (ANKRD2).